The primary structure comprises 407 residues: GTPase Obg (407 aa).

An Obg domain is found at 1–159 (MKFVDEVSIR…RDLKLELKVL (159 aa)). The segment at 127–149 (NTRFKSSTNRAPRQTTPGKPGDQ) is disordered. A compositionally biased stretch (polar residues) spans 129-143 (RFKSSTNRAPRQTTP). One can recognise an OBG-type G domain in the interval 160–333 (ADVGLLGLPN…LTRDIMRYLE (174 aa)). Residues 166-173 (GLPNAGKS), 191-195 (FTTLV), 213-216 (DIPG), 283-286 (NKCD), and 314-316 (SAI) contribute to the GTP site. Mg(2+)-binding residues include S173 and T193. A disordered region spans residues 376-407 (SGVKSVHDIGDDDWDEEDVDDEDGPEIIYVRD). Residues 385-400 (GDDDWDEEDVDDEDGP) are compositionally biased toward acidic residues.

It belongs to the TRAFAC class OBG-HflX-like GTPase superfamily. OBG GTPase family. Monomer. It depends on Mg(2+) as a cofactor.

The protein localises to the cytoplasm. An essential GTPase which binds GTP, GDP and possibly (p)ppGpp with moderate affinity, with high nucleotide exchange rates and a fairly low GTP hydrolysis rate. Plays a role in control of the cell cycle, stress response, ribosome biogenesis and in those bacteria that undergo differentiation, in morphogenesis control. This chain is GTPase Obg, found in Pseudomonas savastanoi pv. phaseolicola (strain 1448A / Race 6) (Pseudomonas syringae pv. phaseolicola (strain 1448A / Race 6)).